Reading from the N-terminus, the 342-residue chain is N-acetyl-gamma-glutamyl-phosphate reductase (342 aa).

Cys147 is an active-site residue.

Belongs to the NAGSA dehydrogenase family. Type 1 subfamily.

Its subcellular location is the cytoplasm. The catalysed reaction is N-acetyl-L-glutamate 5-semialdehyde + phosphate + NADP(+) = N-acetyl-L-glutamyl 5-phosphate + NADPH + H(+). It functions in the pathway amino-acid biosynthesis; L-arginine biosynthesis; N(2)-acetyl-L-ornithine from L-glutamate: step 3/4. In terms of biological role, catalyzes the NADPH-dependent reduction of N-acetyl-5-glutamyl phosphate to yield N-acetyl-L-glutamate 5-semialdehyde. This is N-acetyl-gamma-glutamyl-phosphate reductase from Campylobacter jejuni subsp. jejuni serotype O:23/36 (strain 81-176).